The chain runs to 914 residues: Probable dipeptidyl-aminopeptidase B (914 aa).

The span at 1 to 10 shows a compositional bias: acidic residues; that stretch reads MGKSEADEDA. Residues 1-81 form a disordered region; it reads MGKSEADEDA…DQPFLPSRKG (81 aa). Residues 1 to 89 lie on the Cytoplasmic side of the membrane; that stretch reads MGKSEADEDA…KGSGARARRV (89 aa). A compositionally biased stretch (low complexity) spans 20 to 34; it reads SSSAASQTSSDSGLS. A helical; Signal-anchor for type II membrane protein membrane pass occupies residues 90-110; it reads FWGLLLLCLAGWVLAFVLFLI. The Vacuolar segment spans residues 111 to 914; the sequence is QGRSGYSATS…FKRALPVFVH (804 aa). N-linked (GlcNAc...) asparagine glycosylation is found at Asn347 and Asn638. Ser752 (charge relay system) is an active-site residue. A glycan (N-linked (GlcNAc...) asparagine) is linked at Asn806. Residues Asp829 and His862 each act as charge relay system in the active site.

This sequence belongs to the peptidase S9B family.

It is found in the vacuole membrane. It carries out the reaction Release of an N-terminal dipeptide, Xaa-Yaa-|-Zaa-, from a polypeptide, preferentially when Yaa is Pro, provided Zaa is neither Pro nor hydroxyproline.. Type IV dipeptidyl-peptidase which removes N-terminal dipeptides sequentially from polypeptides having unsubstituted N-termini provided that the penultimate residue is proline. The sequence is that of Probable dipeptidyl-aminopeptidase B (dapB) from Aspergillus terreus (strain NIH 2624 / FGSC A1156).